The primary structure comprises 152 residues: Transcription elongation factor Spt5 (152 aa).

Residues 98–127 (EGDLVEVVSGPFRGMQAQVVKVTEGKGEVV) enclose the KOW domain.

It belongs to the archaeal Spt5 family. As to quaternary structure, heterodimer composed of Spt4 and Spt5. Interacts with RNA polymerase (RNAP).

Functionally, stimulates transcription elongation. This Acidianus ambivalens (Desulfurolobus ambivalens) protein is Transcription elongation factor Spt5.